We begin with the raw amino-acid sequence, 401 residues long: Serine--glyoxylate aminotransferase (401 aa).

N-acetylmethionine is present on methionine 1. Pyridoxal 5'-phosphate is bound by residues 68 to 70 (TGT), threonine 148, and 200 to 201 (QK). Lysine 201 lines the 3-hydroxypyruvate pocket. An N6-(pyridoxal phosphate)lysine modification is found at lysine 201. At serine 204 the chain carries Phosphoserine. Residue arginine 347 coordinates 3-hydroxypyruvate. Positions 399 to 401 (SRI) match the Microbody targeting signal motif.

The protein belongs to the class-V pyridoxal-phosphate-dependent aminotransferase family. In terms of assembly, forms homodimers. Interacts with RABGAP22. Pyridoxal 5'-phosphate serves as cofactor. Widely expressed. Preferentially expressed in green, leafy tissues, root cortex and epidermis, developing siliques and dry seeds.

Its subcellular location is the peroxisome. The enzyme catalyses glyoxylate + L-serine = 3-hydroxypyruvate + glycine. It catalyses the reaction glyoxylate + L-alanine = glycine + pyruvate. It carries out the reaction L-serine + pyruvate = 3-hydroxypyruvate + L-alanine. The catalysed reaction is 3-hydroxypyruvate + L-asparagine = 2-oxosuccinamate + L-serine. The enzyme catalyses L-asparagine + glyoxylate = 2-oxosuccinamate + glycine. It catalyses the reaction L-asparagine + pyruvate = 2-oxosuccinamate + L-alanine. With respect to regulation, inhibited by aminooxyacetate and beta-chloro-L-alanine, but not by p-hydroxymercuribenzoate. Photorespiratory enzyme that catalyzes transamination reactions with multiple substrates, including asparagine. Functions exclusively as a catabolic enzyme in Asn metabolism. Involved in root development during seedling establishment after seed germination by regulating serine homeostasis and acetate conversion. The chain is Serine--glyoxylate aminotransferase from Arabidopsis thaliana (Mouse-ear cress).